A 316-amino-acid polypeptide reads, in one-letter code: Actinorhodin polyketide synthase bifunctional cyclase/dehydratase (316 aa).

The protein operates within antibiotic biosynthesis; actinorhodin biosynthesis. In terms of biological role, is needed for correct cyclization of the oligoketide leading to isochromanequinone formation. This Streptomyces coelicolor (strain ATCC BAA-471 / A3(2) / M145) protein is Actinorhodin polyketide synthase bifunctional cyclase/dehydratase.